The sequence spans 1082 residues: DNA-directed RNA polymerase subunit beta (1082 aa).

The protein belongs to the RNA polymerase beta chain family. In plastids the minimal PEP RNA polymerase catalytic core is composed of four subunits: alpha, beta, beta', and beta''. When a (nuclear-encoded) sigma factor is associated with the core the holoenzyme is formed, which can initiate transcription.

It localises to the plastid. Its subcellular location is the chloroplast. It carries out the reaction RNA(n) + a ribonucleoside 5'-triphosphate = RNA(n+1) + diphosphate. Its function is as follows. DNA-dependent RNA polymerase catalyzes the transcription of DNA into RNA using the four ribonucleoside triphosphates as substrates. This is DNA-directed RNA polymerase subunit beta from Euglena gracilis.